A 141-amino-acid chain; its full sequence is Endoribonuclease YbeY (141 aa).

Histidine 105, histidine 109, and aspartate 115 together coordinate Zn(2+).

Belongs to the endoribonuclease YbeY family. Zn(2+) serves as cofactor.

It localises to the cytoplasm. Its function is as follows. Single strand-specific metallo-endoribonuclease involved in late-stage 70S ribosome quality control and in maturation of the 3' terminus of the 16S rRNA. This chain is Endoribonuclease YbeY, found in Chlorobaculum parvum (strain DSM 263 / NCIMB 8327) (Chlorobium vibrioforme subsp. thiosulfatophilum).